We begin with the raw amino-acid sequence, 103 residues long: Small ribosomal subunit protein uS10 (103 aa).

This sequence belongs to the universal ribosomal protein uS10 family. Part of the 30S ribosomal subunit.

Functionally, involved in the binding of tRNA to the ribosomes. The protein is Small ribosomal subunit protein uS10 of Helicobacter hepaticus (strain ATCC 51449 / 3B1).